A 318-amino-acid polypeptide reads, in one-letter code: Beta-galactosidase small subunit (318 aa).

The protein belongs to the bacterial beta-galactosidase small subunit family. As to quaternary structure, heterodimer of a large (LacL) and a small subunit (LacM).

It carries out the reaction Hydrolysis of terminal non-reducing beta-D-galactose residues in beta-D-galactosides.. In terms of biological role, component of a beta-galactosidase. This chain is Beta-galactosidase small subunit, found in Lactobacillus helveticus (Lactobacillus suntoryeus).